A 339-amino-acid chain; its full sequence is UDP-N-acetylglucosamine--N-acetylmuramyl-(pentapeptide) pyrophosphoryl-undecaprenol N-acetylglucosamine transferase (339 aa).

Residues 11–13 (TGG), N127, R170, S188, I235, and Q280 each bind UDP-N-acetyl-alpha-D-glucosamine.

Belongs to the glycosyltransferase 28 family. MurG subfamily.

Its subcellular location is the cell inner membrane. It carries out the reaction di-trans,octa-cis-undecaprenyl diphospho-N-acetyl-alpha-D-muramoyl-L-alanyl-D-glutamyl-meso-2,6-diaminopimeloyl-D-alanyl-D-alanine + UDP-N-acetyl-alpha-D-glucosamine = di-trans,octa-cis-undecaprenyl diphospho-[N-acetyl-alpha-D-glucosaminyl-(1-&gt;4)]-N-acetyl-alpha-D-muramoyl-L-alanyl-D-glutamyl-meso-2,6-diaminopimeloyl-D-alanyl-D-alanine + UDP + H(+). It participates in cell wall biogenesis; peptidoglycan biosynthesis. Functionally, cell wall formation. Catalyzes the transfer of a GlcNAc subunit on undecaprenyl-pyrophosphoryl-MurNAc-pentapeptide (lipid intermediate I) to form undecaprenyl-pyrophosphoryl-MurNAc-(pentapeptide)GlcNAc (lipid intermediate II). In Thermotoga sp. (strain RQ2), this protein is UDP-N-acetylglucosamine--N-acetylmuramyl-(pentapeptide) pyrophosphoryl-undecaprenol N-acetylglucosamine transferase.